Reading from the N-terminus, the 478-residue chain is MISVMSSAASFRTEKDLLGVLEVPAQAYYGIQTLRAVNNFRLSGVPISHYPKLVVGLAMVKQAAADANRELGQLSERKHAAISEACARLIRGDFHEEFVVDMIQGGAGTSTNMNANEVIANIALEAMGHQKGEYQYLHPNNDVNMAQSTNDAYPTAIRLGLLLGHDALLASLDSLIQAFAAKGAEFSHVLKMGRTQLQDAVPMTLGQEFRAFATTLGEDLARLKTLAPELLTEVNLGGTAIGTGINADPRYQALAVQRLATISGQPLVPAADLIEATSDMGAFVLFSGMLKRTAVKLSKICNDLRLLSSGPRTGINEINLPARQPGSSIMPGKVNPVIPEAVNQVAFQVIGNDLALTMAAEGGQLQLNVMEPLIAFKIFDSIRLLQRAMDMLREHCIVGITANEARCRELVEHSIGLVTALNPYIGYENATRIARIALESGRGVLELVREEGLLDDAMLDDILRPENMIAPRLVPLKA.

Threonine 109, serine 148, threonine 149, asparagine 150, and threonine 195 together coordinate L-aspartate. Residues 326–335 (GSSIMPGKVN) are SS loop. The active-site Proton acceptor is the serine 327. L-aspartate contacts are provided by serine 328 and lysine 333.

This sequence belongs to the class-II fumarase/aspartase family. Aspartase subfamily. As to quaternary structure, homotetramer.

The catalysed reaction is L-aspartate = fumarate + NH4(+). In terms of biological role, catalyzes the reversible conversion of L-aspartate to fumarate and ammonia. The sequence is that of Aspartate ammonia-lyase from Pseudomonas fluorescens.